The primary structure comprises 267 residues: Pyridoxine 5'-phosphate synthase (267 aa).

Asn8 provides a ligand contact to 3-amino-2-oxopropyl phosphate. 10 to 11 (DH) provides a ligand contact to 1-deoxy-D-xylulose 5-phosphate. Position 19 (Arg19) interacts with 3-amino-2-oxopropyl phosphate. The Proton acceptor role is filled by His44. Positions 46 and 51 each coordinate 1-deoxy-D-xylulose 5-phosphate. Glu71 acts as the Proton acceptor in catalysis. Thr101 contacts 1-deoxy-D-xylulose 5-phosphate. His219 acts as the Proton donor in catalysis. 3-amino-2-oxopropyl phosphate-binding positions include Gly220 and 241 to 242 (GH).

This sequence belongs to the PNP synthase family. As to quaternary structure, homooctamer; tetramer of dimers.

It localises to the cytoplasm. It catalyses the reaction 3-amino-2-oxopropyl phosphate + 1-deoxy-D-xylulose 5-phosphate = pyridoxine 5'-phosphate + phosphate + 2 H2O + H(+). The protein operates within cofactor biosynthesis; pyridoxine 5'-phosphate biosynthesis; pyridoxine 5'-phosphate from D-erythrose 4-phosphate: step 5/5. Functionally, catalyzes the complicated ring closure reaction between the two acyclic compounds 1-deoxy-D-xylulose-5-phosphate (DXP) and 3-amino-2-oxopropyl phosphate (1-amino-acetone-3-phosphate or AAP) to form pyridoxine 5'-phosphate (PNP) and inorganic phosphate. The sequence is that of Pyridoxine 5'-phosphate synthase from Helicobacter hepaticus (strain ATCC 51449 / 3B1).